The chain runs to 296 residues: Phosphatidylglycerol--prolipoprotein diacylglyceryl transferase (296 aa).

A run of 7 helical transmembrane segments spans residues 17–37, 59–79, 97–117, 129–149, 204–224, 230–250, and 257–277; these read LAVR…IVVG, MMFY…VLFY, GGMS…LFAW, FVAP…FING, SQLY…FLFA, MGAI…TVEF, and FLGL…PMIL. Arg142 is a binding site for a 1,2-diacyl-sn-glycero-3-phospho-(1'-sn-glycerol).

The protein belongs to the Lgt family.

It is found in the cell inner membrane. The enzyme catalyses L-cysteinyl-[prolipoprotein] + a 1,2-diacyl-sn-glycero-3-phospho-(1'-sn-glycerol) = an S-1,2-diacyl-sn-glyceryl-L-cysteinyl-[prolipoprotein] + sn-glycerol 1-phosphate + H(+). Its pathway is protein modification; lipoprotein biosynthesis (diacylglyceryl transfer). In terms of biological role, catalyzes the transfer of the diacylglyceryl group from phosphatidylglycerol to the sulfhydryl group of the N-terminal cysteine of a prolipoprotein, the first step in the formation of mature lipoproteins. The protein is Phosphatidylglycerol--prolipoprotein diacylglyceryl transferase of Burkholderia cenocepacia (strain HI2424).